The sequence spans 346 residues: Cysteinyl leukotriene receptor 2 (346 aa).

At 1–42 (MERKFMSLQPSISVSEMEPNGTFSNNNSRNCTIENFKREFFP) the chain is on the extracellular side. N-linked (GlcNAc...) asparagine glycosylation is found at Asn-20, Asn-26, and Asn-30. Residues 43–63 (IVYLIIFFWGVLGNGLSIYVF) form a helical membrane-spanning segment. The Cytoplasmic segment spans residues 64 to 72 (LQPYKKSTS). The helical transmembrane segment at 73-93 (VNVFMLNLAISDLLFISTLPF) threads the bilayer. Over 94 to 123 (RADYYLRGSNWIFGDLACRIMSYSLYVNMY) the chain is Extracellular. Residues Cys-111 and Cys-187 are joined by a disulfide bond. Residues 124-144 (SSIYFLTVLSVVRFLAMVHPF) form a helical membrane-spanning segment. Topologically, residues 145-153 (RLLHVTSIR) are cytoplasmic. A helical membrane pass occupies residues 154–174 (SAWILCGIIWILIMASSIMLL). Residues 175–204 (DSGSEQNGSVTSCLELNLYKIAKLQTMNYI) lie on the Extracellular side of the membrane. A glycan (N-linked (GlcNAc...) asparagine) is linked at Asn-181. A helical transmembrane segment spans residues 205-225 (ALVVGCLLPFFTLSICYLLII). The Cytoplasmic segment spans residues 226–245 (RVLLKVEVPESGLRVSHRKA). A helical transmembrane segment spans residues 246–266 (LTTIIITLIIFFLCFLPYHTL). Residues 267–286 (RTVHLTTWKVGLCKDRLHKA) lie on the Extracellular side of the membrane. A helical transmembrane segment spans residues 287–307 (LVITLALAAANACFNPLLYYF). The Cytoplasmic segment spans residues 308-346 (AGENFKDRLKSALRKGHPQKAKTKCVFPVSVWLRKETRV).

It belongs to the G-protein coupled receptor 1 family. Widely expressed, with highest levels in the heart, placenta, spleen, peripheral blood leukocytes and adrenal gland. In lung, expressed in the interstitial macrophages, and slightly in smooth muscle cells.

It is found in the cell membrane. In terms of biological role, receptor for cysteinyl leukotrienes. The response is mediated via a G-protein that activates a phosphatidylinositol-calcium second messenger system. Stimulation by BAY u9773, a partial agonist, induces specific contractions of pulmonary veins and might also have an indirect role in the relaxation of the pulmonary vascular endothelium. The rank order of affinities for the leukotrienes is LTC4 = LTD4 &gt;&gt; LTE4. The chain is Cysteinyl leukotriene receptor 2 (CYSLTR2) from Homo sapiens (Human).